The primary structure comprises 217 residues: Probable transaldolase (217 aa).

K83 serves as the catalytic Schiff-base intermediate with substrate.

The protein belongs to the transaldolase family. Type 3B subfamily.

It is found in the cytoplasm. The enzyme catalyses D-sedoheptulose 7-phosphate + D-glyceraldehyde 3-phosphate = D-erythrose 4-phosphate + beta-D-fructose 6-phosphate. The protein operates within carbohydrate degradation; pentose phosphate pathway; D-glyceraldehyde 3-phosphate and beta-D-fructose 6-phosphate from D-ribose 5-phosphate and D-xylulose 5-phosphate (non-oxidative stage): step 2/3. Its function is as follows. Transaldolase is important for the balance of metabolites in the pentose-phosphate pathway. This is Probable transaldolase from Dinoroseobacter shibae (strain DSM 16493 / NCIMB 14021 / DFL 12).